A 377-amino-acid chain; its full sequence is Carbonic anhydrase 1 (377 aa).

The first 20 residues, 1 to 20 (MARTGALLLVALALAGCAQA), serve as a signal peptide directing secretion. Residues 38 to 318 (DHWDHGLNGE…HHHRRLLHNH (281 aa)) form the Alpha-carbonic anhydrase domain. 3 cysteine pairs are disulfide-bonded: Cys-61–Cys-264, Cys-194–Cys-198, and Cys-296–Cys-351. The N-linked (GlcNAc...) asparagine glycan is linked to Asn-101. The Proton acceptor role is filled by His-112. An N-linked (GlcNAc...) asparagine glycan is attached at Asn-135. Residues His-163, His-165, and His-182 each coordinate Zn(2+). Substrate contacts are provided by residues Thr-260 and 260–261 (TT). A glycan (N-linked (GlcNAc...) asparagine) is linked at Asn-297.

Belongs to the alpha-carbonic anhydrase family. As to quaternary structure, tetramer of two large and two small subunits linked by two disulfide bonds. Zn(2+) serves as cofactor.

Its subcellular location is the periplasm. It catalyses the reaction hydrogencarbonate + H(+) = CO2 + H2O. In terms of biological role, reversible hydration of carbon dioxide. The chain is Carbonic anhydrase 1 (CAH1) from Chlamydomonas reinhardtii (Chlamydomonas smithii).